The following is a 262-amino-acid chain: Small ribosomal subunit protein eS4 (262 aa).

The region spanning 42–105 (LPLXVFLRNR…NEHFRLAYDV (64 aa)) is the S4 RNA-binding domain.

It belongs to the eukaryotic ribosomal protein eS4 family.

This Candida albicans (Yeast) protein is Small ribosomal subunit protein eS4 (RPS4).